Consider the following 695-residue polypeptide: Probable Rho-GTPase-activating protein 7 (695 aa).

Residues 1–11 (MLSAPSSSTTP) are compositionally biased toward low complexity. The segment at 1-26 (MLSAPSSSTTPASPPTSPPNTTSSDD) is disordered. The region spanning 33 to 307 (PKVEAILNSE…ALDNINANTD (275 aa)) is the F-BAR domain. Residues 320–499 (EDNKNPTDAS…SVSPQPSSPT (180 aa)) form a disordered region. Polar residues-rich tracts occupy residues 336 to 348 (PPSS…SAGK) and 366 to 382 (PLQN…NPSV). 3 stretches are compositionally biased toward low complexity: residues 383 to 432 (ASPA…RTSS), 458 to 467 (PIQTTTIQTS), and 488 to 499 (PTSVSPQPSSPT). Phosphoserine is present on residues Ser-496 and Ser-497. Residues 506 to 692 (ARLDAIILRE…ILIDYCFTIF (187 aa)) form the Rho-GAP domain.

The chain is Probable Rho-GTPase-activating protein 7 (rga7) from Schizosaccharomyces pombe (strain 972 / ATCC 24843) (Fission yeast).